A 1506-amino-acid chain; its full sequence is ABC transporter C family member 9 (1506 aa).

Helical transmembrane passes span 37-57, 84-104, 116-136, 150-170, 179-199, 315-335, 350-370, 427-447, 452-472, 541-561, and 567-587; these read MQVT…FGVV, ISLL…LLLF, VSVF…SVVV, MLRS…AHFI, FQDY…AVSI, AINA…PYLI, LNHG…ETVT, FIWY…AIYI, LGLG…CNYP, FILW…CMLM, and AGAV…IFGL. The ABC transmembrane type-1 1 domain occupies 314–596; the sequence is AAINAVFAVV…LPDLLSALVQ (283 aa). Residues 630–853 enclose the ABC transporter 1 domain; the sequence is VEIENGAFSW…NIGFEVLVGA (224 aa). An ATP-binding site is contributed by 665–672; it reads GAVGSGKS. 5 helical membrane passes run 934–956, 976–996, 1048–1068, 1167–1187, and 1191–1211; these read LLVP…SNYW, ILLV…ARTI, MAVK…TIFV, LSHF…EGVI, and IAGL…TVIW. The ABC transmembrane type-1 2 domain maps to 936–1218; it reads VPFIILAQSC…VIWNICNAEN (283 aa). In terms of domain architecture, ABC transporter 2 spans 1257–1489; sequence FRDLQVRYAE…EDSFFSKLIK (233 aa). ATP is bound at residue 1289–1296; the sequence is GRTGSGKS.

Belongs to the ABC transporter superfamily. ABCC family. Conjugate transporter (TC 3.A.1.208) subfamily. As to expression, ubiquitous.

The protein localises to the membrane. It catalyses the reaction ATP + H2O + xenobioticSide 1 = ADP + phosphate + xenobioticSide 2.. Functionally, pump for glutathione S-conjugates. The sequence is that of ABC transporter C family member 9 (ABCC9) from Arabidopsis thaliana (Mouse-ear cress).